The chain runs to 111 residues: MEFSVESLETPALTKAHLAELLFEQIGLNKRESKDMIDAFFDLISDSLVDGNDVKISGFGNFQIRTKAPRPGRNPRTGEAIPIQARRVVTFHASHKLKDQIQGDSAADIAE.

The protein belongs to the bacterial histone-like protein family. In terms of assembly, heterodimer of an alpha and a beta chain.

Its function is as follows. This protein is one of the two subunits of integration host factor, a specific DNA-binding protein that functions in genetic recombination as well as in transcriptional and translational control. In Polaromonas sp. (strain JS666 / ATCC BAA-500), this protein is Integration host factor subunit alpha.